The following is a 298-amino-acid chain: uncharacterized protein (298 aa).

Residues 1-61 (MDIFISKKMR…TRKDNNISLN (61 aa)) form the HTH lysR-type domain. Residues 21 to 40 (IARAAEKIHMTASPFGKSIA) constitute a DNA-binding region (H-T-H motif).

This sequence belongs to the LysR transcriptional regulatory family.

This is an uncharacterized protein from Escherichia coli (strain K12).